A 590-amino-acid chain; its full sequence is Membrane protein insertase YidC (590 aa).

The next 5 membrane-spanning stretches (helical) occupy residues 5 to 25, 368 to 388, 433 to 453, 483 to 503, and 519 to 539; these read SVIG…FMKP, GLII…LSLA, LGGC…FYVF, LPLY…TVFF, and IMMW…PAGL.

This sequence belongs to the OXA1/ALB3/YidC family. Type 1 subfamily. In terms of assembly, interacts with the Sec translocase complex via SecD. Specifically interacts with transmembrane segments of nascent integral membrane proteins during membrane integration.

It is found in the cell inner membrane. In terms of biological role, required for the insertion and/or proper folding and/or complex formation of integral membrane proteins into the membrane. Involved in integration of membrane proteins that insert both dependently and independently of the Sec translocase complex, as well as at least some lipoproteins. Aids folding of multispanning membrane proteins. This chain is Membrane protein insertase YidC, found in Chlorobaculum tepidum (strain ATCC 49652 / DSM 12025 / NBRC 103806 / TLS) (Chlorobium tepidum).